Reading from the N-terminus, the 84-residue chain is MSEPIESLTVDAVLDATGLFCPEPVMMLHQKVRDLPPSGLLKVIATDPSTCRDIPKFCVFLGHELVAEQAEESTFLYWIRKKSD.

Catalysis depends on Cys21, which acts as the Cysteine persulfide intermediate.

This sequence belongs to the sulfur carrier protein TusA family.

It localises to the cytoplasm. Functionally, sulfur carrier protein which probably makes part of a sulfur-relay system. The chain is Sulfur carrier protein TusA from Pseudomonas syringae pv. tomato (strain ATCC BAA-871 / DC3000).